A 200-amino-acid chain; its full sequence is Cleavage and polyadenylation specificity factor subunit 5 (200 aa).

Residues 45-170 enclose the Nudix hydrolase domain; sequence LRKAVEGIII…LSLIAVSLYE (126 aa). An interaction with RNA region spans residues 70-72; that stretch reads NYF. Residues 77–98 carry the Nudix box motif; sequence GKLKPGENEIDGLIRKLTKKLS.

The protein belongs to the Nudix hydrolase family. CPSF5 subfamily. As to quaternary structure, homodimer (via N- and C-terminus); binds RNA as homodimer. Component of the cleavage factor Im (CFIm) complex.

The protein localises to the nucleus. Its subcellular location is the cytoplasm. Component of the cleavage factor Im (CFIm) complex that functions as an activator of the pre-mRNA 3'-end cleavage and polyadenylation processing required for the maturation of pre-mRNA into functional mRNAs. CFIm contributes to the recruitment of multiprotein complexes on specific sequences on the pre-mRNA 3'-end, so called cleavage and polyadenylation signals (pA signals). Most pre-mRNAs contain multiple pA signals, resulting in alternative cleavage and polyadenylation (APA) producing mRNAs with variable 3'-end formation. The CFIm complex acts as a key regulator of cleavage and polyadenylation site choice during APA through its binding to 5'-UGUA-3' elements localized in the 3'-untranslated region (UTR) for a huge number of pre-mRNAs. Binds to 5'-UGUA-3' elements localized upstream of pA signals that act as enhancers of pre-mRNA 3'-end processing. The homodimer mediates simultaneous sequence-specific recognition of two 5'-UGUA-3' elements within the pre-mRNA. Plays a role in somatic cell fate transitions and pluripotency by regulating widespread changes in gene expression through an APA-dependent function. Binds to chromatin. The polypeptide is Cleavage and polyadenylation specificity factor subunit 5 (Dictyostelium discoideum (Social amoeba)).